The following is an 89-amino-acid chain: Small ribosomal subunit protein uS15c (89 aa).

The protein belongs to the universal ribosomal protein uS15 family. As to quaternary structure, part of the 30S ribosomal subunit.

The protein resides in the plastid. The protein localises to the organellar chromatophore. The chain is Small ribosomal subunit protein uS15c (rps15) from Paulinella chromatophora.